The primary structure comprises 130 residues: Small ribosomal subunit protein uS9 (130 aa).

This sequence belongs to the universal ribosomal protein uS9 family.

The protein is Small ribosomal subunit protein uS9 of Nitrosomonas eutropha (strain DSM 101675 / C91 / Nm57).